A 334-amino-acid polypeptide reads, in one-letter code: Magnesium-chelatase subunit ChlI (334 aa).

Residue 43 to 50 (GDRGTGKS) coordinates ATP.

The protein belongs to the Mg-chelatase subunits D/I family.

The protein localises to the plastid. It is found in the chloroplast. The catalysed reaction is protoporphyrin IX + Mg(2+) + ATP + H2O = Mg-protoporphyrin IX + ADP + phosphate + 3 H(+). It functions in the pathway porphyrin-containing compound metabolism; chlorophyll biosynthesis. Functionally, involved in chlorophyll biosynthesis; introduces a magnesium ion into protoporphyrin IX to yield Mg-protoporphyrin IX. The protein is Magnesium-chelatase subunit ChlI (chlI) of Olisthodiscus luteus (Marine phytoflagellate).